A 182-amino-acid polypeptide reads, in one-letter code: MKPDSIRRYNVIGSRRISNYWWAIIIGSGGLGFLFTGLSSYLQFNLLPIIHAEKIIFFPQGLVMSFYGILGIFFSLYLGLTILFSVGEGFNEFNKELGIIRIFRWGFPGKNRRIDLSYSIDDVKAIRVELKDGINPKRTIYLCIKGQRQIPLTRVGQPLTLEEIEMQAAELAQFLQKDLLLN.

2 helical membrane-spanning segments follow: residues 22–42 (WAII…SSYL) and 66–86 (FYGI…LFSV).

It belongs to the Ycf4 family.

It localises to the plastid. The protein localises to the chloroplast thylakoid membrane. Seems to be required for the assembly of the photosystem I complex. The sequence is that of Photosystem I assembly protein Ycf4 from Tupiella akineta (Green alga).